We begin with the raw amino-acid sequence, 375 residues long: Queuine tRNA-ribosyltransferase (375 aa).

D89 acts as the Proton acceptor in catalysis. Residues 89 to 93, D143, Q187, and G214 contribute to the substrate site; that span reads DSGGF. An RNA binding region spans residues 245-251; it reads GVGKPED. Catalysis depends on D264, which acts as the Nucleophile. The RNA binding; important for wobble base 34 recognition stretch occupies residues 269 to 273; that stretch reads TRNAR. C302, C304, C307, and H333 together coordinate Zn(2+).

Belongs to the queuine tRNA-ribosyltransferase family. In terms of assembly, homodimer. Within each dimer, one monomer is responsible for RNA recognition and catalysis, while the other monomer binds to the replacement base PreQ1. Requires Zn(2+) as cofactor.

The enzyme catalyses 7-aminomethyl-7-carbaguanine + guanosine(34) in tRNA = 7-aminomethyl-7-carbaguanosine(34) in tRNA + guanine. Its pathway is tRNA modification; tRNA-queuosine biosynthesis. Its function is as follows. Catalyzes the base-exchange of a guanine (G) residue with the queuine precursor 7-aminomethyl-7-deazaguanine (PreQ1) at position 34 (anticodon wobble position) in tRNAs with GU(N) anticodons (tRNA-Asp, -Asn, -His and -Tyr). Catalysis occurs through a double-displacement mechanism. The nucleophile active site attacks the C1' of nucleotide 34 to detach the guanine base from the RNA, forming a covalent enzyme-RNA intermediate. The proton acceptor active site deprotonates the incoming PreQ1, allowing a nucleophilic attack on the C1' of the ribose to form the product. After dissociation, two additional enzymatic reactions on the tRNA convert PreQ1 to queuine (Q), resulting in the hypermodified nucleoside queuosine (7-(((4,5-cis-dihydroxy-2-cyclopenten-1-yl)amino)methyl)-7-deazaguanosine). This chain is Queuine tRNA-ribosyltransferase, found in Photobacterium profundum (strain SS9).